A 309-amino-acid chain; its full sequence is Carbamate kinase-like protein (309 aa).

The interval 125–144 (NKPVGPFYNTEETARSANPN) is disordered.

This sequence belongs to the carbamate kinase family.

This chain is Carbamate kinase-like protein, found in Mycoplasma pneumoniae (strain ATCC 29342 / M129 / Subtype 1) (Mycoplasmoides pneumoniae).